A 161-amino-acid polypeptide reads, in one-letter code: Cyclic pyranopterin monophosphate synthase (161 aa).

Residues 75-77 (MCH) and 115-116 (ME) each bind substrate. D130 is an active-site residue.

Belongs to the MoaC family. In terms of assembly, homohexamer; trimer of dimers.

It catalyses the reaction (8S)-3',8-cyclo-7,8-dihydroguanosine 5'-triphosphate = cyclic pyranopterin phosphate + diphosphate. It participates in cofactor biosynthesis; molybdopterin biosynthesis. Catalyzes the conversion of (8S)-3',8-cyclo-7,8-dihydroguanosine 5'-triphosphate to cyclic pyranopterin monophosphate (cPMP). This is Cyclic pyranopterin monophosphate synthase from Bacillus cereus (strain 03BB102).